Consider the following 343-residue polypeptide: NAC domain-containing protein 4 (343 aa).

The NAC domain occupies Leu12–Lys168. Residues Val109–Gly174 mediate DNA binding. A disordered region spans residues Gly304–Lys333. The segment covering Ser311–Gln332 has biased composition (polar residues).

In terms of tissue distribution, expressed in roots, tiller buds, stems, leaves, lamina joints and the young husks. Expressed in embryos, coleoptiles, radicles, leaf pulvinus, ligules, panicles, palea and lemma, anthers, and the internode of the peduncles. Expressed in young leaves, root meristems, florescence meristems and young spikelets.

It is found in the nucleus. In terms of biological role, transcription factor involved in the regulation of tiller bud outgrowth, but does not seem to regulate tiller bud initiation. Possesses transactivation activity in yeast. Involved in the regulation of plant architecture and grain yield. Acts as a negative regulator of plant height and flowering time. Regulates directly key genes of the gibberellin (GA) pathway by binding to their promoters. Positively regulates leaf senescence in an age-dependent manner. Activates directly the expression of the chlorophyll degradation genes SGR and NYC3. Positively regulates the level of abscisic acid (ABA) by directly up-regulating the expression of the ABA biosynthetic genes NCED3 and ZEP, and down-regulating the ABA catabolic gene CYP707A5/ABA8OX1. Promotes salt-induced cell death accompanied by the loss of plasma membrane integrity, nuclear DNA fragmentation, and changes of caspase-like activity. Targets genes that encoded a reactive oxygen species (ROS) scavenger COX11 and a caspase-like protease AP37. Activates the potassium efflux channels GORK and SKOR. Acts as a positive regulator of drought and salt tolerance through ABA-mediated pathways. Acts as a negative regulator of root growth. Functions as an upstream integrator of auxin and cytokinin signals that affect CROWN ROOTLESS (CRL) and cyclin-dependent protein kinase (CDK) genes to regulate cell division during root development. Binds directly to the promoters of the auxin inactivation-related genes GH3.6 and GH3.8, the auxin signaling-related gene ARF25, and the cytokinin oxidase gene CKX4. Activates directly the expressions of the 1-aminocyclopropane-1-carboxylate oxidase genes ACO1 and ACO3, enhancing ethylene synthesis, and then retarding seedling establishment. The polypeptide is NAC domain-containing protein 4 (Oryza sativa subsp. japonica (Rice)).